Reading from the N-terminus, the 384-residue chain is ATP phosphoribosyltransferase regulatory subunit (384 aa).

This sequence belongs to the class-II aminoacyl-tRNA synthetase family. HisZ subfamily. In terms of assembly, heteromultimer composed of HisG and HisZ subunits.

It localises to the cytoplasm. It functions in the pathway amino-acid biosynthesis; L-histidine biosynthesis; L-histidine from 5-phospho-alpha-D-ribose 1-diphosphate: step 1/9. Its function is as follows. Required for the first step of histidine biosynthesis. May allow the feedback regulation of ATP phosphoribosyltransferase activity by histidine. The protein is ATP phosphoribosyltransferase regulatory subunit of Azoarcus sp. (strain BH72).